We begin with the raw amino-acid sequence, 227 residues long: Cytochrome c oxidase subunit 2 (227 aa).

The Mitochondrial intermembrane portion of the chain corresponds to 1–14 (MAYPFQLGLQDATS). The helical transmembrane segment at 15–45 (PIMEELLHFHDHTLMIVFLISSLVLYIISLM) threads the bilayer. Topologically, residues 46–59 (LTTKLTHTSTMDAQ) are mitochondrial matrix. Residues 60–87 (EVETVWTILPAIILILIALPSLRILYMM) traverse the membrane as a helical segment. Over 88 to 227 (DEINNPSLTV…YFEAWSALMV (140 aa)) the chain is Mitochondrial intermembrane. His161, Cys196, Glu198, Cys200, His204, and Met207 together coordinate Cu cation. Glu198 lines the Mg(2+) pocket. Residue Tyr218 is modified to Phosphotyrosine.

The protein belongs to the cytochrome c oxidase subunit 2 family. In terms of assembly, component of the cytochrome c oxidase (complex IV, CIV), a multisubunit enzyme composed of 14 subunits. The complex is composed of a catalytic core of 3 subunits MT-CO1, MT-CO2 and MT-CO3, encoded in the mitochondrial DNA, and 11 supernumerary subunits COX4I, COX5A, COX5B, COX6A, COX6B, COX6C, COX7A, COX7B, COX7C, COX8 and NDUFA4, which are encoded in the nuclear genome. The complex exists as a monomer or a dimer and forms supercomplexes (SCs) in the inner mitochondrial membrane with NADH-ubiquinone oxidoreductase (complex I, CI) and ubiquinol-cytochrome c oxidoreductase (cytochrome b-c1 complex, complex III, CIII), resulting in different assemblies (supercomplex SCI(1)III(2)IV(1) and megacomplex MCI(2)III(2)IV(2)). Found in a complex with TMEM177, COA6, COX18, COX20, SCO1 and SCO2. Interacts with TMEM177 in a COX20-dependent manner. Interacts with COX20. Interacts with COX16. Requires Cu cation as cofactor.

The protein localises to the mitochondrion inner membrane. The enzyme catalyses 4 Fe(II)-[cytochrome c] + O2 + 8 H(+)(in) = 4 Fe(III)-[cytochrome c] + 2 H2O + 4 H(+)(out). In terms of biological role, component of the cytochrome c oxidase, the last enzyme in the mitochondrial electron transport chain which drives oxidative phosphorylation. The respiratory chain contains 3 multisubunit complexes succinate dehydrogenase (complex II, CII), ubiquinol-cytochrome c oxidoreductase (cytochrome b-c1 complex, complex III, CIII) and cytochrome c oxidase (complex IV, CIV), that cooperate to transfer electrons derived from NADH and succinate to molecular oxygen, creating an electrochemical gradient over the inner membrane that drives transmembrane transport and the ATP synthase. Cytochrome c oxidase is the component of the respiratory chain that catalyzes the reduction of oxygen to water. Electrons originating from reduced cytochrome c in the intermembrane space (IMS) are transferred via the dinuclear copper A center (CU(A)) of subunit 2 and heme A of subunit 1 to the active site in subunit 1, a binuclear center (BNC) formed by heme A3 and copper B (CU(B)). The BNC reduces molecular oxygen to 2 water molecules using 4 electrons from cytochrome c in the IMS and 4 protons from the mitochondrial matrix. This is Cytochrome c oxidase subunit 2 (MT-CO2) from Cuon alpinus (Dhole).